The following is a 401-amino-acid chain: CCA-adding enzyme (401 aa).

ATP contacts are provided by Gly-32 and Arg-35. Residues Gly-32 and Arg-35 each contribute to the CTP site. Asp-45 and Asp-47 together coordinate Mg(2+). Arg-116, Asp-159, Arg-162, Arg-165, and Arg-168 together coordinate ATP. CTP is bound by residues Arg-116, Asp-159, Arg-162, Arg-165, and Arg-168.

This sequence belongs to the tRNA nucleotidyltransferase/poly(A) polymerase family. Bacterial CCA-adding enzyme type 3 subfamily. Homodimer. Mg(2+) is required as a cofactor.

It carries out the reaction a tRNA precursor + 2 CTP + ATP = a tRNA with a 3' CCA end + 3 diphosphate. The catalysed reaction is a tRNA with a 3' CCA end + 2 CTP + ATP = a tRNA with a 3' CCACCA end + 3 diphosphate. Its function is as follows. Catalyzes the addition and repair of the essential 3'-terminal CCA sequence in tRNAs without using a nucleic acid template. Adds these three nucleotides in the order of C, C, and A to the tRNA nucleotide-73, using CTP and ATP as substrates and producing inorganic pyrophosphate. tRNA 3'-terminal CCA addition is required both for tRNA processing and repair. Also involved in tRNA surveillance by mediating tandem CCA addition to generate a CCACCA at the 3' terminus of unstable tRNAs. While stable tRNAs receive only 3'-terminal CCA, unstable tRNAs are marked with CCACCA and rapidly degraded. In Streptococcus mutans serotype c (strain ATCC 700610 / UA159), this protein is CCA-adding enzyme.